The chain runs to 140 residues: Small ribosomal subunit protein uS12 (140 aa).

At Asp102 the chain carries 3-methylthioaspartic acid.

Belongs to the universal ribosomal protein uS12 family. Part of the 30S ribosomal subunit. Contacts proteins S8 and S17. May interact with IF1 in the 30S initiation complex.

In terms of biological role, with S4 and S5 plays an important role in translational accuracy. Functionally, interacts with and stabilizes bases of the 16S rRNA that are involved in tRNA selection in the A site and with the mRNA backbone. Located at the interface of the 30S and 50S subunits, it traverses the body of the 30S subunit contacting proteins on the other side and probably holding the rRNA structure together. The combined cluster of proteins S8, S12 and S17 appears to hold together the shoulder and platform of the 30S subunit. The sequence is that of Small ribosomal subunit protein uS12 from Geobacillus stearothermophilus (Bacillus stearothermophilus).